Here is a 37-residue protein sequence, read N- to C-terminus: Cytochrome b6-f complex subunit 5 (37 aa).

The chain crosses the membrane as a helical span at residues 5-25 (LLCGIVLGLIPVTLLGLFVAA).

The protein belongs to the PetG family. The 4 large subunits of the cytochrome b6-f complex are cytochrome b6, subunit IV (17 kDa polypeptide, PetD), cytochrome f and the Rieske protein, while the 4 small subunits are PetG, PetL, PetM and PetN. The complex functions as a dimer.

The protein localises to the cellular thylakoid membrane. Component of the cytochrome b6-f complex, which mediates electron transfer between photosystem II (PSII) and photosystem I (PSI), cyclic electron flow around PSI, and state transitions. PetG is required for either the stability or assembly of the cytochrome b6-f complex. The chain is Cytochrome b6-f complex subunit 5 from Synechococcus sp. (strain WH7803).